The sequence spans 892 residues: Translation initiation factor IF-2 (892 aa).

The interval 88–305 (KKRTFVKRDP…SLQQGFQKPA (218 aa)) is disordered. Composition is skewed to basic and acidic residues over residues 93–159 (VKRD…KDKV) and 166–216 (DMTK…EENK). The segment covering 254 to 269 (GRGRNAKAARPAKKGK) has biased composition (basic residues). The span at 270-282 (HAESKADREEARA) shows a compositional bias: basic and acidic residues. Positions 391 to 560 (PRAPVVTIMG…LLQAEVLELK (170 aa)) constitute a tr-type G domain. The tract at residues 400–407 (GHVDHGKT) is G1. 400 to 407 (GHVDHGKT) contributes to the GTP binding site. The tract at residues 425 to 429 (GITQH) is G2. The segment at 446–449 (DTPG) is G3. GTP-binding positions include 446-450 (DTPGH) and 500-503 (NKID). The interval 500 to 503 (NKID) is G4. Residues 536-538 (SAK) are G5.

Belongs to the TRAFAC class translation factor GTPase superfamily. Classic translation factor GTPase family. IF-2 subfamily.

The protein localises to the cytoplasm. Functionally, one of the essential components for the initiation of protein synthesis. Protects formylmethionyl-tRNA from spontaneous hydrolysis and promotes its binding to the 30S ribosomal subunits. Also involved in the hydrolysis of GTP during the formation of the 70S ribosomal complex. The protein is Translation initiation factor IF-2 of Salmonella agona (strain SL483).